Consider the following 578-residue polypeptide: E3 ubiquitin protein ligase RIN2 (578 aa).

A run of 6 helical transmembrane segments spans residues 6–26 (LPVS…WTEL), 58–78 (FTIA…VLSL), 111–131 (LVIP…TVLC), 161–181 (VYSV…LSLM), 186–206 (IGSA…FETL), and 272–292 (YLHI…VLFL). An RING-type; atypical zinc finger spans residues 337 to 379 (CAICREPMAKAKRLHCNHLFHLGCLRSWLDQGLNEVYSCPTCR). The span at 504 to 513 (QASTSSTTVP) shows a compositional bias: polar residues. Residues 504–524 (QASTSSTTVPPGNGGRTGGLH) form a disordered region. Residues 538–578 (NILAMAETVREVMPHVPDEIIFQDLQRTNSVAVTVNNLLQM) enclose the CUE domain.

As to quaternary structure, interacts (via C-terminus) with RPM1 (via N-terminus).

Its subcellular location is the membrane. It catalyses the reaction S-ubiquitinyl-[E2 ubiquitin-conjugating enzyme]-L-cysteine + [acceptor protein]-L-lysine = [E2 ubiquitin-conjugating enzyme]-L-cysteine + N(6)-ubiquitinyl-[acceptor protein]-L-lysine.. It functions in the pathway protein modification; protein ubiquitination. E3 ubiquitin protein ligase that acts as a positive regulator of RPM1- and RPS2-dependent hypersensitive response (HR), in association with RIN3. Probably not required for RPM1 degradation during HR. This Arabidopsis thaliana (Mouse-ear cress) protein is E3 ubiquitin protein ligase RIN2 (RIN2).